Reading from the N-terminus, the 1264-residue chain is Valine--tRNA ligase (1264 aa).

Position 2 is an N-acetylserine (serine 2). The region spanning 89–219 (GSRAAVLVQQ…YSGARSVTQQ (131 aa)) is the GST C-terminal domain. A compositionally biased stretch (polar residues) spans 218–230 (QQPGSEITAPQKT). The segment at 218-296 (QQPGSEITAP…GEKKDVSGTM (79 aa)) is disordered. 2 stretches are compositionally biased toward basic and acidic residues: residues 234–248 (LKKEAKKREKLEKFQ) and 260–275 (HGEKKPKPEKKEKRDP). A 'HIGH' region motif is present at residues 344–354 (PNVTGSLHLGH). Phosphoserine occurs at positions 437 and 527. Lysine 645 carries the post-translational modification N6-acetyllysine. Residues 862–866 (KMSKS) carry the 'KMSKS' region motif. Lysine 865 provides a ligand contact to ATP.

It belongs to the class-I aminoacyl-tRNA synthetase family. In terms of assembly, forms high-molecular-mass aggregates with elongation factor 1.

The enzyme catalyses tRNA(Val) + L-valine + ATP = L-valyl-tRNA(Val) + AMP + diphosphate. Its activity is regulated as follows. Can be regulated by protein kinase C-dependent phosphorylation. The sequence is that of Valine--tRNA ligase (Vars1) from Rattus norvegicus (Rat).